Here is a 517-residue protein sequence, read N- to C-terminus: Crotonobetaine/carnitine--CoA ligase (517 aa).

It belongs to the ATP-dependent AMP-binding enzyme family.

The catalysed reaction is 4-(trimethylamino)butanoate + ATP + CoA = 4-(trimethylamino)butanoyl-CoA + AMP + diphosphate. It carries out the reaction crotonobetaine + ATP + CoA = crotonobetainyl-CoA + AMP + diphosphate. The enzyme catalyses (R)-carnitine + ATP + CoA = (R)-carnitinyl-CoA + AMP + diphosphate. Its pathway is amine and polyamine metabolism; carnitine metabolism. In terms of biological role, catalyzes the transfer of CoA to carnitine, generating the initial carnitinyl-CoA needed for the CaiB reaction cycle. Also has activity toward crotonobetaine and gamma-butyrobetaine. In Escherichia coli O139:H28 (strain E24377A / ETEC), this protein is Crotonobetaine/carnitine--CoA ligase.